We begin with the raw amino-acid sequence, 73 residues long: Putative neurotoxin NaH-Cpp1a (73 aa).

The signal sequence occupies residues 1–23; the sequence is MKSFYGILCVAVLMMFHLEMSES. Disulfide bonds link Cys43–Cys58, Cys50–Cys63, and Cys57–Cys70.

Expressed outside of acontia.

Its subcellular location is the secreted. It is found in the nematocyst. Putative neurotoxin. The chain is Putative neurotoxin NaH-Cpp1a from Calliactis polypus (Hermit crab anemone).